Consider the following 381-residue polypeptide: RxLR effector protein 54 (381 aa).

An N-terminal signal peptide occupies residues M1–A19. The RxLR-dEER signature appears at R57 to R75. 5 WY-domain regions span residues S97–G150, N151–G198, N199–N247, F251–S299, and S302–I354. The short motif at K372 to V381 is the ATG8 interacting motif element.

The protein belongs to the RxLR effector family. Interacts via its C-terminal AIM with host ATG8CL.

It is found in the secreted. The protein localises to the host nucleus. The protein resides in the host cytoplasm. Effector that specifically binds host autophagy protein ATG8CL of the ATG8 family to stimulate autophagosome formation and subsequent autophagy rather than blocking autophagic flux. The pathogen remodels host-microbe interface by co-opting the host autophagy machinery which plays a key role in plant immunity. PexRD54 competes with the autophagy cargo receptor Joka2 to deplete it out of ATG8CL complexes and interferes with Joka2's positive effect on pathogen defense. The sequence is that of RxLR effector protein 54 from Phytophthora infestans (strain T30-4) (Potato late blight agent).